We begin with the raw amino-acid sequence, 605 residues long: Putative zinc finger CCCH domain-containing protein 57 (605 aa).

3 disordered regions span residues 198–218 (RHTG…GREV), 238–261 (LLQD…DGEV), and 375–403 (QASH…YQQP). Composition is skewed to basic and acidic residues over residues 201–218 (GHES…GREV) and 238–250 (LLQD…RADA). Residues 389 to 403 (FPFQQQPQHDGYQQP) are compositionally biased toward low complexity. 2 C3H1-type zinc fingers span residues 519-547 (EPKT…HSQD) and 557-585 (KYRT…QHRL).

This chain is Putative zinc finger CCCH domain-containing protein 57, found in Oryza sativa subsp. japonica (Rice).